The following is a 162-amino-acid chain: Cyclic pyranopterin monophosphate synthase (162 aa).

Substrate contacts are provided by residues 75–77 (LCH) and 113–114 (ME). D128 is an active-site residue.

This sequence belongs to the MoaC family. As to quaternary structure, homohexamer; trimer of dimers.

The enzyme catalyses (8S)-3',8-cyclo-7,8-dihydroguanosine 5'-triphosphate = cyclic pyranopterin phosphate + diphosphate. It participates in cofactor biosynthesis; molybdopterin biosynthesis. Catalyzes the conversion of (8S)-3',8-cyclo-7,8-dihydroguanosine 5'-triphosphate to cyclic pyranopterin monophosphate (cPMP). This is Cyclic pyranopterin monophosphate synthase from Klebsiella pneumoniae subsp. pneumoniae (strain ATCC 700721 / MGH 78578).